The primary structure comprises 208 residues: Small ribosomal subunit protein uS4 (208 aa).

Residues 97 to 160 form the S4 RNA-binding domain; the sequence is SRLDNIVFRL…KKNDKIAEAL (64 aa).

It belongs to the universal ribosomal protein uS4 family. As to quaternary structure, part of the 30S ribosomal subunit. Contacts protein S5. The interaction surface between S4 and S5 is involved in control of translational fidelity.

Functionally, one of the primary rRNA binding proteins, it binds directly to 16S rRNA where it nucleates assembly of the body of the 30S subunit. With S5 and S12 plays an important role in translational accuracy. In Mesoplasma florum (strain ATCC 33453 / NBRC 100688 / NCTC 11704 / L1) (Acholeplasma florum), this protein is Small ribosomal subunit protein uS4.